Reading from the N-terminus, the 207-residue chain is Prolactin (207 aa).

A signal peptide spans 1-20 (KSRLYFAVTVLMCAFVSING). Disulfide bonds link C66–C180 and C197–C207.

It belongs to the somatotropin/prolactin family. As to expression, pituitary gland.

The protein localises to the secreted. This Hypophthalmichthys molitrix (Silver carp) protein is Prolactin (prl).